We begin with the raw amino-acid sequence, 228 residues long: 6-carboxyhexanoate--CoA ligase (228 aa).

This sequence belongs to the BioW family. As to quaternary structure, homodimer. Mg(2+) serves as cofactor.

It catalyses the reaction heptanedioate + ATP + CoA = 6-carboxyhexanoyl-CoA + AMP + diphosphate. It functions in the pathway metabolic intermediate metabolism; pimeloyl-CoA biosynthesis; pimeloyl-CoA from pimelate: step 1/1. In terms of biological role, catalyzes the transformation of pimelate into pimeloyl-CoA with concomitant hydrolysis of ATP to AMP. The protein is 6-carboxyhexanoate--CoA ligase of Staphylococcus epidermidis (strain ATCC 12228 / FDA PCI 1200).